A 180-amino-acid polypeptide reads, in one-letter code: Ribosome rescue factor SmrB (180 aa).

The Smr domain occupies 98-173 (LDLHGLTQLQ…GNAALLVLVA (76 aa)).

It belongs to the SmrB family. Associates with collided ribosomes, but not with correctly translating polysomes.

Functionally, acts as a ribosome collision sensor. Detects stalled/collided disomes (pairs of ribosomes where the leading ribosome is stalled and a second ribosome has collided with it) and endonucleolytically cleaves mRNA at the 5' boundary of the stalled ribosome. Stalled/collided disomes form a new interface (primarily via the 30S subunits) that binds SmrB. Cleaved mRNA becomes available for tmRNA ligation, leading to ribosomal subunit dissociation and rescue of stalled ribosomes. The polypeptide is Ribosome rescue factor SmrB (Pectobacterium atrosepticum (strain SCRI 1043 / ATCC BAA-672) (Erwinia carotovora subsp. atroseptica)).